A 297-amino-acid chain; its full sequence is GTP cyclohydrolase FolE2 (297 aa).

2 disordered regions span residues 1–21 (MTHA…SERD) and 180–207 (IRAE…RERP).

The protein belongs to the GTP cyclohydrolase IV family.

It carries out the reaction GTP + H2O = 7,8-dihydroneopterin 3'-triphosphate + formate + H(+). It functions in the pathway cofactor biosynthesis; 7,8-dihydroneopterin triphosphate biosynthesis; 7,8-dihydroneopterin triphosphate from GTP: step 1/1. Functionally, converts GTP to 7,8-dihydroneopterin triphosphate. The sequence is that of GTP cyclohydrolase FolE2 from Methylibium petroleiphilum (strain ATCC BAA-1232 / LMG 22953 / PM1).